The sequence spans 619 residues: Grainyhead-like protein 2 homolog (619 aa).

The tract at residues 1 to 90 (MSQETDNKRL…KINEGHEDQD (90 aa)) is transcription activation. Disordered regions lie at residues 86-108 (HEDQDKRNCLPANETPSNLSTGE), 125-147 (NDTVESSNREKYTTSLSESPQPA), and 423-444 (EERKQNRKKGKSQAAQAQCNNS). Polar residues predominate over residues 99–108 (ETPSNLSTGE). In terms of domain architecture, Grh/CP2 DB spans 239 to 477 (ASSTFQYTLE…DLDVQPVLFI (239 aa)).

The protein belongs to the grh/CP2 family. Grainyhead subfamily.

It is found in the nucleus. Its subcellular location is the membrane. In terms of biological role, transcription factor playing an important role in primary neurulation and in epithelial development. Binds directly to the consensus DNA sequence 5'-AACCGGTT-3' acting as an activator and repressor on distinct target genes. This is Grainyhead-like protein 2 homolog (grhl2) from Xenopus tropicalis (Western clawed frog).